The chain runs to 686 residues: Osmo-dependent choline transporter BetT2 (686 aa).

Topologically, residues 1–22 (MATDNPRAVDDQETHPKDRLNR) are cytoplasmic. The chain crosses the membrane as a helical span at residues 23–43 (VVFYVSALIILIFSLTTILFN). Residues 44–60 (DFANRALNQVLDWVSST) lie on the Periplasmic side of the membrane. A helical membrane pass occupies residues 61-81 (FSWYYLLAATLYMVFVIFIAC). Residues 82–100 (SRYGNIKLGPKHSKPEFSL) lie on the Cytoplasmic side of the membrane. The chain crosses the membrane as a helical span at residues 101 to 121 (LSWSAMLFSAGIGIDLMFFSV). At 122–150 (AEPLSHYMHPPVGEGQTYEAARQGMVWTL) the chain is on the periplasmic side. Residues 151 to 171 (FHYGLTGWCMYALIGMALGYF) form a helical membrane-spanning segment. At 172-203 (SYRYNLPLTIRSALYPIFGKKINGPIGHSVDT) the chain is on the cytoplasmic side. The helical transmembrane segment at 204–224 (AAVIGTIFGIATTCGIGVVQL) threads the bilayer. The Periplasmic segment spans residues 225 to 237 (NYGLHVLFDLPEN). Residues 238–258 (LWVQTALILVAVIITIISVTS) traverse the membrane as a helical segment. The Cytoplasmic segment spans residues 259-265 (GVNKGLR). The helical transmembrane segment at 266 to 286 (ILSEVNIYVSVGLMLFILFLG) threads the bilayer. The Periplasmic portion of the chain corresponds to 287–325 (NTEFLLNALVQNVGDYLSRFPSLALESFAFDQPKEWMNS). A helical membrane pass occupies residues 326-346 (WTLFFWAWWVAWSPFVGLFLA). Residues 347-356 (RISRGRTIRE) lie on the Cytoplasmic side of the membrane. The helical transmembrane segment at 357–377 (FVSGTLIIPLLFTLTWLSIFG) threads the bilayer. The Periplasmic portion of the chain corresponds to 378–412 (NSALHNVIFDGNIALAETVLSNPAHGFYDLLAQYP). A helical membrane pass occupies residues 413 to 433 (WFPFIAGVATITGLLFYVTSA). Topologically, residues 434 to 459 (DSGALVLGNFTTQFTNIDHDAPRWLS) are cytoplasmic. The chain crosses the membrane as a helical span at residues 460–480 (VFWAVAIGLLTLAMLMTNGIT). Over 481-484 (ALQN) the chain is Periplasmic. A helical transmembrane segment spans residues 485–505 (ATIIMGLPFSFVMFLVMAGLY). The Cytoplasmic segment spans residues 506-686 (KSLRLEDYRQ…NRPLFPDPKA (181 aa)).

The protein belongs to the BCCT transporter (TC 2.A.15) family.

The protein resides in the cell inner membrane. In terms of biological role, uptake of choline in the presence of high salinity. May primarily serve for osmoprotection. This Acinetobacter baylyi (strain ATCC 33305 / BD413 / ADP1) protein is Osmo-dependent choline transporter BetT2.